A 460-amino-acid chain; its full sequence is Ribosomal protein uS12 methylthiotransferase RimO (460 aa).

An MTTase N-terminal domain is found at 16-130 (NKIHFISLGC…ILSAIESKEA (115 aa)). The [4Fe-4S] cluster site is built by C25, C61, C93, C164, C168, and C171. Positions 150-382 (STPKHYAYLK…SQTQKKNVEK (233 aa)) constitute a Radical SAM core domain. In terms of domain architecture, TRAM spans 385-455 (KQLVGQIVEA…GYDLVGRVIK (71 aa)).

The protein belongs to the methylthiotransferase family. RimO subfamily. It depends on [4Fe-4S] cluster as a cofactor.

The protein resides in the cytoplasm. It carries out the reaction L-aspartate(89)-[ribosomal protein uS12]-hydrogen + (sulfur carrier)-SH + AH2 + 2 S-adenosyl-L-methionine = 3-methylsulfanyl-L-aspartate(89)-[ribosomal protein uS12]-hydrogen + (sulfur carrier)-H + 5'-deoxyadenosine + L-methionine + A + S-adenosyl-L-homocysteine + 2 H(+). Its function is as follows. Catalyzes the methylthiolation of an aspartic acid residue of ribosomal protein uS12. The polypeptide is Ribosomal protein uS12 methylthiotransferase RimO (Chlamydia caviae (strain ATCC VR-813 / DSM 19441 / 03DC25 / GPIC) (Chlamydophila caviae)).